The sequence spans 528 residues: Peptide chain release factor 3 (528 aa).

Positions aspartate 10–arginine 278 constitute a tr-type G domain. GTP-binding positions include serine 19–threonine 26, aspartate 87–histidine 91, and asparagine 141–aspartate 144.

This sequence belongs to the TRAFAC class translation factor GTPase superfamily. Classic translation factor GTPase family. PrfC subfamily.

The protein localises to the cytoplasm. Increases the formation of ribosomal termination complexes and stimulates activities of RF-1 and RF-2. It binds guanine nucleotides and has strong preference for UGA stop codons. It may interact directly with the ribosome. The stimulation of RF-1 and RF-2 is significantly reduced by GTP and GDP, but not by GMP. The sequence is that of Peptide chain release factor 3 from Syntrophotalea carbinolica (strain DSM 2380 / NBRC 103641 / GraBd1) (Pelobacter carbinolicus).